The following is a 320-amino-acid chain: Cytochrome f (320 aa).

Residues 1–35 form the signal peptide; it reads MQTRNAFSWIKKEITRSISVLLMIYIITRAPISNA. Heme-binding residues include Y36, C56, C59, and H60. Residues 286–305 form a helical membrane-spanning segment; that stretch reads VQGLLLFLASIILAQIFLVL.

Belongs to the cytochrome f family. In terms of assembly, the 4 large subunits of the cytochrome b6-f complex are cytochrome b6, subunit IV (17 kDa polypeptide, petD), cytochrome f and the Rieske protein, while the 4 small subunits are PetG, PetL, PetM and PetN. The complex functions as a dimer. It depends on heme as a cofactor.

The protein localises to the plastid. Its subcellular location is the chloroplast thylakoid membrane. Its function is as follows. Component of the cytochrome b6-f complex, which mediates electron transfer between photosystem II (PSII) and photosystem I (PSI), cyclic electron flow around PSI, and state transitions. The chain is Cytochrome f (petA) from Vicia faba (Broad bean).